The chain runs to 126 residues: DNA-directed RNA polymerase I subunit RPA12 (126 aa).

Zn(2+)-binding residues include cysteine 20, cysteine 23, cysteine 38, cysteine 41, cysteine 87, and cysteine 90. The C4-type zinc-finger motif lies at 20–41 (CSDCGSVLPLPGAQDTVTCIRC). The TFIIS-type zinc-finger motif lies at 83-123 (VDRRCPRCGHEGMAYHTRQMRSADEGQTVFYTCTNCKFQEK). The Hairpin signature appears at 106–107 (DE). Residues cysteine 115 and cysteine 118 each coordinate Zn(2+).

Belongs to the archaeal RpoM/eukaryotic RPA12/RPB9/RPC11 RNA polymerase family. Component of the RNA polymerase I (Pol I) complex consisting of 13 subunits: a ten-subunit catalytic core composed of POLR1A/RPA1, POLR1B/RPA2, POLR1C/RPAC1, POLR1D/RPAC2, POLR1H/RPA12, POLR2E/RPABC1, POLR2F/RPABC2, POLR2H/RPABC3, POLR2K/RPABC4 and POLR2L/RPABC5; a mobile stalk subunit POLR1F/RPA43 protruding from the core and additional subunits homologous to general transcription factors POLR1E/RPA49 and POLR1G/RPA34. Part of Pol I pre-initiation complex (PIC), in which Pol I core assembles with RRN3 and promoter-bound UTBF and SL1/TIF-IB complex.

It is found in the nucleus. Its subcellular location is the nucleolus. Core component of RNA polymerase I (Pol I), a DNA-dependent RNA polymerase which synthesizes ribosomal RNA precursors using the four ribonucleoside triphosphates as substrates. Can mediate Pol I proofreading of the nascent RNA transcript. Anchors into the Pol I active site to monitor transcription fidelity and cleave mis-incorporated 5'-ribonucleotides. The polypeptide is DNA-directed RNA polymerase I subunit RPA12 (Homo sapiens (Human)).